The primary structure comprises 383 residues: uncharacterized protein (383 aa).

This sequence belongs to the peptidase M20 family.

This is an uncharacterized protein from Staphylococcus epidermidis (strain ATCC 35984 / DSM 28319 / BCRC 17069 / CCUG 31568 / BM 3577 / RP62A).